The primary structure comprises 120 residues: Large ribosomal subunit protein uL14 (120 aa).

This sequence belongs to the universal ribosomal protein uL14 family. In terms of assembly, part of the 50S ribosomal subunit. Forms a cluster with proteins L3 and L19. In the 70S ribosome, L14 and L19 interact and together make contacts with the 16S rRNA in bridges B5 and B8.

In terms of biological role, binds to 23S rRNA. Forms part of two intersubunit bridges in the 70S ribosome. This chain is Large ribosomal subunit protein uL14, found in Dictyoglomus thermophilum (strain ATCC 35947 / DSM 3960 / H-6-12).